Here is a 384-residue protein sequence, read N- to C-terminus: GTPase Obg (384 aa).

Residues 1–159 form the Obg domain; that stretch reads MKFIDEAKIE…RSLQLELKVL (159 aa). The disordered stretch occupies residues 20-46; sequence ATSFRREKFVPRGGPDGGDGGKGGSVW. Residues 33–43 show a composition bias toward gly residues; sequence GPDGGDGGKGG. Positions 160-348 constitute an OBG-type G domain; it reads ADVGLLGMPN…LVHQINQYLT (189 aa). GTP is bound by residues 166–173, 191–195, 213–216, 284–287, and 329–331; these read GMPNAGKS, FTTLH, DIPG, NKLD, and SAL. Mg(2+)-binding residues include S173 and T193.

It belongs to the TRAFAC class OBG-HflX-like GTPase superfamily. OBG GTPase family. Monomer. It depends on Mg(2+) as a cofactor.

It localises to the cytoplasm. Functionally, an essential GTPase which binds GTP, GDP and possibly (p)ppGpp with moderate affinity, with high nucleotide exchange rates and a fairly low GTP hydrolysis rate. Plays a role in control of the cell cycle, stress response, ribosome biogenesis and in those bacteria that undergo differentiation, in morphogenesis control. The chain is GTPase Obg from Neisseria meningitidis serogroup C / serotype 2a (strain ATCC 700532 / DSM 15464 / FAM18).